A 1208-amino-acid polypeptide reads, in one-letter code: DNA-directed RNA polymerase subunit beta (1208 aa).

It belongs to the RNA polymerase beta chain family. In terms of assembly, the RNAP catalytic core consists of 2 alpha, 1 beta, 1 beta' and 1 omega subunit. When a sigma factor is associated with the core the holoenzyme is formed, which can initiate transcription.

The enzyme catalyses RNA(n) + a ribonucleoside 5'-triphosphate = RNA(n+1) + diphosphate. DNA-dependent RNA polymerase catalyzes the transcription of DNA into RNA using the four ribonucleoside triphosphates as substrates. The protein is DNA-directed RNA polymerase subunit beta of Enterococcus faecium (Streptococcus faecium).